Reading from the N-terminus, the 418-residue chain is Isocitrate dehydrogenase [NADP] (418 aa).

Residue T106 coordinates NADP(+). D-threo-isocitrate is bound by residues S115, N117, R121, R131, and R155. A Phosphoserine modification is found at S115. T193 carries the post-translational modification Phosphothreonine. D309 is a binding site for Mg(2+). Residues 341-347, N354, Y393, and R397 contribute to the NADP(+) site; that span reads HGTAPKY.

This sequence belongs to the isocitrate and isopropylmalate dehydrogenases family. In terms of assembly, homodimer. Mg(2+) serves as cofactor. Requires Mn(2+) as cofactor.

The protein localises to the secreted. The catalysed reaction is D-threo-isocitrate + NADP(+) = 2-oxoglutarate + CO2 + NADPH. Catalyzes the oxidative decarboxylation of isocitrate to 2-oxoglutarate and carbon dioxide with the concomitant reduction of NADP(+). This chain is Isocitrate dehydrogenase [NADP] (icd), found in Pseudomonas aeruginosa (strain UCBPP-PA14).